Reading from the N-terminus, the 548-residue chain is Natural resistance-associated macrophage protein 1 (548 aa).

Residues 1 to 11 (MSGDTGPSKQG) show a composition bias toward polar residues. Residues 1–38 (MSGDTGPSKQGGTRYGSISSPPSPGPQQAPPGGTYLGE) are disordered. Residues 1-55 (MSGDTGPSKQGGTRYGSISSPPSPGPQQAPPGGTYLGEKIPIPDTESGAFSLRKL) lie on the Cytoplasmic side of the membrane. A helical transmembrane segment spans residues 56–73 (WAFTGPGFLMSIAFLDPG). The Extracellular segment spans residues 74-82 (NIESDLQAG). A helical transmembrane segment spans residues 83-102 (AVAGFKLLWVLLWATVLGLL). Over 103–139 (CQRLAARLGVVTGKDLGEVCHLYYPKVPRILLWLTIE) the chain is Cytoplasmic. Residues 140–160 (LAIVGSDMQEVIGTAIAFSLL) form a helical membrane-spanning segment. Residues 161–164 (SAGR) lie on the Extracellular side of the membrane. The chain crosses the membrane as a helical span at residues 165–184 (IPLWGGVLITVVDTFFFLFL). Topologically, residues 185-193 (DNYGLRKLE) are cytoplasmic. Residues 194–214 (AFFGFLITIMALTFGYEYVVA) traverse the membrane as a helical segment. Topologically, residues 215–237 (QPAQGALLQGLFLPSCRGCGQPE) are extracellular. A helical membrane pass occupies residues 238 to 256 (LLQAVGIIGAIIMPHNIYL). Over 257–284 (HSSLVKSREVDRSRRADIREANMYFLIE) the chain is Cytoplasmic. Residues 285-304 (ATIALSVSFLINLFVMAVFG) traverse the membrane as a helical segment. The Extracellular segment spans residues 305 to 346 (QAFYKQTNQAAFNICAKSSLHDYAPIFPRNNLTVAVDIYQGG). N-linked (GlcNAc...) asparagine glycosylation is present at Asn-335. Residues 347–366 (VILGCLFGPAALYIWAVGLL) traverse the membrane as a helical segment. The Cytoplasmic segment spans residues 367–397 (AAGQSSTMTGTYAGQFVMEGFLKLRWSRFAR). Residues 398–415 (VLLTRSCAILPTVLLAVF) form a helical membrane-spanning segment. The Extracellular portion of the chain corresponds to 416 to 426 (RDLRDLSGLND). Residues 427–447 (LLNVLQSLLLPFAVLPILTFT) form a helical membrane-spanning segment. The Cytoplasmic segment spans residues 448–463 (SMPALMQEFANGLVSK). The chain crosses the membrane as a helical span at residues 464-485 (VITSSIMVLVCAVNLYFVISYV). Over 486 to 493 (PSLPHPAY) the chain is Extracellular. The chain crosses the membrane as a helical span at residues 494-513 (FSLVALLAAAYLGLTTYLVW). The Cytoplasmic segment spans residues 514–548 (TCLITQGATFLAHNSHQRFLYGLPEEDQEKGRTSG).

The protein belongs to the NRAMP family.

It localises to the late endosome membrane. Its subcellular location is the lysosome membrane. The enzyme catalyses Zn(2+)(in) + H(+)(out) = Zn(2+)(out) + H(+)(in). It catalyses the reaction Fe(2+)(in) + H(+)(out) = Fe(2+)(out) + H(+)(in). The catalysed reaction is Mn(2+)(in) + H(+)(out) = Mn(2+)(out) + H(+)(in). Its function is as follows. Macrophage-specific antiporter that fluxes metal ions in either direction against a proton gradient. Localized to late endosomal lysosomal membranes, delivers bivalent cations from the cytosol into these acidic compartments where they may directly affect antimicrobial activity. Involved in iron metabolism and host natural resistance to infection with intracellular parasites. Pathogen resistance involves sequestration of Fe(2+) and Mn(2+), cofactors of both prokaryotic and eukaryotic catalases and superoxide dismutases, not only to protect the macrophage against its own generation of reactive oxygen species, but to deny the cations to the pathogen for synthesis of its protective enzymes. In Bubalus bubalis (Domestic water buffalo), this protein is Natural resistance-associated macrophage protein 1 (SLC11A1).